Consider the following 221-residue polypeptide: Vesicle transport v-SNARE 13 (221 aa).

The Cytoplasmic segment spans residues 1-198 (MSQGFERYER…MTRRMNRNKW (198 aa)). A coiled-coil region spans residues 32–93 (EQKKQNLSEI…FKTEVKRITS (62 aa)). Residues 199–219 (TIGAIITVLVLAIIFILYFKL) form a helical; Anchor for type IV membrane protein membrane-spanning segment. Residues 220-221 (TR) lie on the Vesicular side of the membrane.

This sequence belongs to the VTI1 family. Forms SNARE complexes with t-SNAREs. Expressed at low levels in roots, stems, flowers and leaves.

The protein resides in the vacuole membrane. The protein localises to the prevacuolar compartment membrane. It localises to the endosome membrane. Its subcellular location is the early endosome membrane. Its function is as follows. May function as a v-SNARE responsible for targeting vesicles involved in the secretory pathway. Involved in actin-dependent endosomal trafficking pathways associated with the vacuole within root hairs and root tip epidermal cells. Essential for cell wall organization and polarized root hair growth. Also required for the localization of SYP41 to the trans-Golgi network in root hair cells. The polypeptide is Vesicle transport v-SNARE 13 (Arabidopsis thaliana (Mouse-ear cress)).